Consider the following 96-residue polypeptide: MKIRPLHDRVLVKRNEAELKSAGGIVLTGSAAAKSTRGTITAVGNGRVLDNGQIKPLDVKVGDVVIFNEGYGAKTEKIDNEELLILNESDILAIVE.

The protein belongs to the GroES chaperonin family. As to quaternary structure, heptamer of 7 subunits arranged in a ring. Interacts with the chaperonin GroEL.

It localises to the cytoplasm. In terms of biological role, together with the chaperonin GroEL, plays an essential role in assisting protein folding. The GroEL-GroES system forms a nano-cage that allows encapsulation of the non-native substrate proteins and provides a physical environment optimized to promote and accelerate protein folding. GroES binds to the apical surface of the GroEL ring, thereby capping the opening of the GroEL channel. This Buchnera aphidicola subsp. Schizaphis graminum (strain Sg) protein is Co-chaperonin GroES.